A 73-amino-acid chain; its full sequence is Acyl carrier protein homolog (73 aa).

One can recognise a Carrier domain in the interval 1–72; sequence MAIKEWIITQ…DIIVLIEQKS (72 aa). Ser32 is subject to O-(pantetheine 4'-phosphoryl)serine.

4'-phosphopantetheine is transferred from CoA to a specific serine of the apo-ACP-like protein.

It participates in lipid metabolism; fatty acid biosynthesis. Its function is as follows. Carrier of the growing fatty acid chain in fatty acid biosynthesis. This chain is Acyl carrier protein homolog, found in Mycoplasmopsis pulmonis (strain UAB CTIP) (Mycoplasma pulmonis).